A 1348-amino-acid polypeptide reads, in one-letter code: Kinesin-like protein KIF7 (1348 aa).

In terms of domain architecture, Kinesin motor spans 15 to 349 (PVRVALRVRP…LNYASRAQNI (335 aa)). Residue 94–101 (GQTGSGKT) coordinates ATP. The segment at 358-479 (HPEAERVPEE…EDQAAQGTSG (122 aa)) is interaction with DLG5. The interval 358 to 1211 (HPEAERVPEE…LGRHMWINQE (854 aa)) is interaction with SMO. 2 disordered regions span residues 451–486 (RSTL…DEGT) and 607–674 (AQAD…VCPE). A coiled-coil region spans residues 480–542 (RKGDEGTQQL…ELRLRLELAQ (63 aa)). Acidic residues predominate over residues 620 to 636 (SEEEGEEEEEEEEEEEE). Coiled coils occupy residues 698 to 1057 (APAA…IEAL) and 1109 to 1211 (FDKV…INQE). The residue at position 903 (S903) is a Phosphoserine. Disordered regions lie at residues 1288-1314 (LCSE…VLPM) and 1328-1348 (KPRW…KNPL).

Belongs to the TRAFAC class myosin-kinesin ATPase superfamily. Kinesin family. Can form homodimers and interacts with microtubules. Interacts with GLI1 and SMO. Interacts with GLI2, GLI3 and SUFU. Interacts with NPHP1. Interacts with SMO and DLG5 (via PDZ4 or guanylate kinase-like domain). Post-translationally, polyubiquitinated by UBR3. In terms of tissue distribution, expressed in heart, lung, liver, kidney, testis, spleen and cerebellum.

It is found in the cell projection. Its subcellular location is the cilium. The protein localises to the cytoplasm. The protein resides in the cytoskeleton. It localises to the cilium basal body. Functionally, essential for hedgehog signaling regulation: acts both as a negative and a positive regulator of sonic hedgehog (Shh) and Indian hedgehog (Ihh) pathways, acting downstream of SMO, through both SUFU-dependent and -independent mechanisms. Involved in the regulation of microtubular dynamics. Required for proper organization of the ciliary tip and control of ciliary localization of SUFU-GLI2 complexes. Required for localization of GLI3 to cilia in response to Shh. Negatively regulates Shh signaling by preventing inappropriate activation of the transcriptional activator GLI2 in the absence of ligand. Positively regulates Shh signaling by preventing the processing of the transcription factor GLI3 into its repressor form. In keratinocytes, promotes the dissociation of SUFU-GLI2 complexes, GLI2 nuclear translocation and Shh signaling activation. Involved in the regulation of epidermal differentiation and chondrocyte development. The polypeptide is Kinesin-like protein KIF7 (Kif7) (Mus musculus (Mouse)).